The primary structure comprises 192 residues: NADH-quinone oxidoreductase subunit C (192 aa).

The segment at 170 to 192 (LGGIPVEYKGATVPPPDERRQYA) is disordered.

The protein belongs to the complex I 30 kDa subunit family. In terms of assembly, NDH-1 is composed of 14 different subunits. Subunits NuoB, C, D, E, F, and G constitute the peripheral sector of the complex.

Its subcellular location is the cell membrane. It catalyses the reaction a quinone + NADH + 5 H(+)(in) = a quinol + NAD(+) + 4 H(+)(out). Its function is as follows. NDH-1 shuttles electrons from NADH, via FMN and iron-sulfur (Fe-S) centers, to quinones in the respiratory chain. The immediate electron acceptor for the enzyme in this species is believed to be a menaquinone. Couples the redox reaction to proton translocation (for every two electrons transferred, four hydrogen ions are translocated across the cytoplasmic membrane), and thus conserves the redox energy in a proton gradient. In Acidothermus cellulolyticus (strain ATCC 43068 / DSM 8971 / 11B), this protein is NADH-quinone oxidoreductase subunit C.